The following is a 1394-amino-acid chain: DNA-directed RNA polymerase subunit beta' (1394 aa).

Cysteine 71, cysteine 73, cysteine 86, and cysteine 89 together coordinate Zn(2+). Mg(2+) contacts are provided by aspartate 462, aspartate 464, and aspartate 466. Residues cysteine 811, cysteine 885, cysteine 892, and cysteine 895 each coordinate Zn(2+).

The protein belongs to the RNA polymerase beta' chain family. In terms of assembly, the RNAP catalytic core consists of 2 alpha, 1 beta, 1 beta' and 1 omega subunit. When a sigma factor is associated with the core the holoenzyme is formed, which can initiate transcription. It depends on Mg(2+) as a cofactor. Zn(2+) serves as cofactor.

The enzyme catalyses RNA(n) + a ribonucleoside 5'-triphosphate = RNA(n+1) + diphosphate. In terms of biological role, DNA-dependent RNA polymerase catalyzes the transcription of DNA into RNA using the four ribonucleoside triphosphates as substrates. This chain is DNA-directed RNA polymerase subunit beta', found in Xanthobacter autotrophicus (strain ATCC BAA-1158 / Py2).